A 613-amino-acid chain; its full sequence is Ribosome-associated molecular chaperone SSB1 (613 aa).

The nucleotide binding domain (NBD) stretch occupies residues 1–391 (MADGVFQGAI…ILTGQSTSDE (391 aa)). ATP-binding positions include 16 to 18 (TTY), Lys73, 205 to 207 (GGT), 271 to 278 (ERAKRTLS), and Gly342. Positions 392–402 (TKDLLLLDVAP) are inter-domain linker. The tract at residues 403 to 613 (LSLGVGMQGD…RVVTKAMSSR (211 aa)) is substrate binding domain (SBD). The interval 516–612 (SEDIEKMVNQ…KRVVTKAMSS (97 aa)) is lid domain (SBDalpha). The short motif at 574-582 (IEAALADAL) is the Nuclear export signal element.

It belongs to the heat shock protein 70 family. Ssb-type Hsp70 subfamily. In terms of assembly, binds to ribosomes. Binds close to the ribosomal tunnel exit via contacts with both ribosomal proteins and rRNA. Directly interacts with nascent polypeptides. This interaction is dependent on the ribosome-associated complex (RAC). Interacts with SSE1. Interacts with FES1.

Its subcellular location is the cytoplasm. The catalysed reaction is ATP + H2O = ADP + phosphate + H(+). Its function is as follows. Ribosome-bound, Hsp70-type chaperone that assists in the cotranslational folding of newly synthesized proteins in the cytosol. Stimulates folding by interacting with nascent chains, binding to short, largely hydrophobic sequences exposed by unfolded proteins, thereby stabilizing longer, more slowly translated, and aggregation-prone nascent polypeptides and domains that cannot fold stably until fully synthesized. The Hsp70-protein substrate interaction depends on ATP-binding and on allosteric regulation between the NBD and the SBD. The ATP-bound state is characterized by a fast exchange rate of substrate (low affinity state), while in the ADP-bound state exchange is much slower (high affinity state). During the Hsp70 cycle, the chaperone switches between the ATP-bound state (open conformation) and the ADP-bound state (closed conformation) by major conformational rearrangements involving mainly the lid domain. Ssb cooperates with a specific Hsp40/Hsp70 co-chaperone termed the ribosome-associated complex (RAC), which stimulates the ATPase activity of the ribosome-associated pool of Ssbs and switches it to the high affinity substrate binding state. Hsp110 chaperone SSE1 and FES1 act as nucleotide exchange factors that cause substrate release. The protein is Ribosome-associated molecular chaperone SSB1 (SSB1) of Nakaseomyces delphensis (Yeast).